A 288-amino-acid chain; its full sequence is Nucleotide-binding protein PM0169 (288 aa).

8 to 15 is an ATP binding site; sequence GHSGAGKS. 56–59 contributes to the GTP binding site; sequence DIRN.

This sequence belongs to the RapZ-like family.

Displays ATPase and GTPase activities. This Pasteurella multocida (strain Pm70) protein is Nucleotide-binding protein PM0169.